Reading from the N-terminus, the 496-residue chain is L-carnitine dehydrogenase/betainyl-CoA thioesterase (496 aa).

The tract at residues 1–335 (MTTITKAACI…KRLWEKGGSP (335 aa)) is L-carnitine dehydrogenase. Residue 11–16 (GGGVIG) coordinates NAD(+). The tract at residues 336-496 (SKSLDASGPL…GAGRHVGQKR (161 aa)) is betainyl-CoA thioesterase.

This sequence in the N-terminal section; belongs to the 3-hydroxyacyl-CoA dehydrogenase family. L-carnitine dehydrogenase subfamily. The protein in the C-terminal section; belongs to the betainyl-CoA thioesterase family. Homodimer.

The protein localises to the cytoplasm. The catalysed reaction is carnitine + NAD(+) = 3-dehydrocarnitine + NADH + H(+). It carries out the reaction N,N,N-trimethylglycyl-CoA + H2O = glycine betaine + CoA + H(+). It participates in amine and polyamine metabolism; carnitine metabolism. Its function is as follows. Multifunctional enzyme that catalyzes the NAD(+)-dependent oxidation of L-carnitine to 3-dehydrocarnitine and the cleavage of betainyl-CoA (N,N,N-trimethylglycyl-CoA) into glycine betaine and coenzyme A. Can also hydrolyze L-carnitinyl-CoA, but with much lower efficiency. Is involved in a L-carnitine degradation pathway that allows R.meliloti to grow on L-carnitine as the sole source of carbon and nitrogen. This Rhizobium meliloti (strain 1021) (Ensifer meliloti) protein is L-carnitine dehydrogenase/betainyl-CoA thioesterase.